The chain runs to 345 residues: Mannonate dehydratase 2 (345 aa).

The protein belongs to the mannonate dehydratase family. The cofactor is Fe(2+). Requires Mn(2+) as cofactor.

The catalysed reaction is D-mannonate = 2-dehydro-3-deoxy-D-gluconate + H2O. The protein operates within carbohydrate metabolism; pentose and glucuronate interconversion. In terms of biological role, catalyzes the dehydration of D-mannonate. The polypeptide is Mannonate dehydratase 2 (uxuA2) (Halalkalibacterium halodurans (strain ATCC BAA-125 / DSM 18197 / FERM 7344 / JCM 9153 / C-125) (Bacillus halodurans)).